A 914-amino-acid polypeptide reads, in one-letter code: Ubiquitin carboxyl-terminal hydrolase 20 (914 aa).

The UBP-type zinc finger occupies 6 to 111 (DLCPHLDSIG…GSSSKFSEQD (106 aa)). Cysteine 8, histidine 10, cysteine 30, cysteine 33, cysteine 43, cysteine 48, cysteine 53, histidine 60, histidine 64, histidine 70, cysteine 83, and cysteine 86 together coordinate Zn(2+). Serine 112, serine 132, and serine 134 each carry phosphoserine. In terms of domain architecture, USP spans 145-685 (TGMKNLGNSC…EGYVLFYRKS (541 aa)). Catalysis depends on cysteine 154, which acts as the Nucleophile. 2 disordered regions span residues 257–347 (LTEA…VDED) and 360–415 (QPAE…ASPV). Threonine 258 carries the post-translational modification Phosphothreonine. Basic and acidic residues predominate over residues 259-279 (EARDSDSSDTDEKREGDRSPS). A Phosphoserine modification is found at serine 305. Residues 316 to 332 (EAGRAISEKERMKDRKF) are compositionally biased toward basic and acidic residues. The residue at position 368 (serine 368) is a Phosphoserine. The residue at position 377 (threonine 377) is a Phosphothreonine. Serine 408 and serine 413 each carry phosphoserine. Histidine 643 (proton acceptor) is an active-site residue. 2 DUSP domains span residues 687–780 (EEAM…LYVC) and 789–892 (ALAK…RQSV).

This sequence belongs to the peptidase C19 family. USP20/USP33 subfamily. As to quaternary structure, interacts with VHL, leading to its ubiquitination and subsequent degradation. Interacts with CCP110. Interacts with DIO2. Interacts with HIF1A. Interacts with ADRB2. Interacts with USP18. Post-translationally, ubiquitinated via a VHL-dependent pathway for proteasomal degradation.

The protein resides in the cytoplasm. The protein localises to the endoplasmic reticulum. It is found in the perinuclear region. Its subcellular location is the cytoskeleton. It localises to the microtubule organizing center. The protein resides in the centrosome. It catalyses the reaction Thiol-dependent hydrolysis of ester, thioester, amide, peptide and isopeptide bonds formed by the C-terminal Gly of ubiquitin (a 76-residue protein attached to proteins as an intracellular targeting signal).. Functionally, deubiquitinating enzyme that plays a role in many cellular processes including autophagy, cellular antiviral response or membrane protein biogenesis. Attenuates TLR4-mediated NF-kappa-B signaling by cooperating with beta-arrestin-2/ARRB2 and inhibiting TRAF6 autoubiquitination. Promotes cellular antiviral responses by deconjugating 'Lys-33' and 'Lys-48'-linked ubiquitination of STING1 leading to its stabilization. Plays an essential role in autophagy induction by regulating the ULK1 stability through deubiquitination of ULK1. Acts as a positive regulator for NF-kappa-B activation by TNF-alpha through deubiquitinating 'Lys-48'-linked polyubiquitination of SQSTM1, leading to its increased stability. Acts as a regulator of G-protein coupled receptor (GPCR) signaling by mediating the deubiquitination beta-2 adrenergic receptor (ADRB2). Plays a central role in ADRB2 recycling and resensitization after prolonged agonist stimulation by constitutively binding ADRB2, mediating deubiquitination of ADRB2 and inhibiting lysosomal trafficking of ADRB2. Upon dissociation, it is probably transferred to the translocated beta-arrestins, possibly leading to beta-arrestins deubiquitination and disengagement from ADRB2. This suggests the existence of a dynamic exchange between the ADRB2 and beta-arrestins. Deubiquitinates DIO2, thereby regulating thyroid hormone regulation. Deubiquitinates HIF1A, leading to stabilize HIF1A and enhance HIF1A-mediated activity. Deubiquitinates MCL1, a pivotal member of the anti-apoptotic Bcl-2 protein family to regulate its stability. Within the endoplasmic reticulum, participates with USP33 in the rescue of post-translationally targeted membrane proteins that are inappropriately ubiquitinated by the cytosolic protein quality control in the cytosol. In Homo sapiens (Human), this protein is Ubiquitin carboxyl-terminal hydrolase 20 (USP20).